We begin with the raw amino-acid sequence, 324 residues long: Acetyl-coenzyme A carboxylase carboxyl transferase subunit alpha (324 aa).

The CoA carboxyltransferase C-terminal domain occupies 37–291; that stretch reads ILEDKLENLE…DLMLRKTFEQ (255 aa).

Belongs to the AccA family. As to quaternary structure, acetyl-CoA carboxylase is a heterohexamer composed of biotin carboxyl carrier protein (AccB), biotin carboxylase (AccC) and two subunits each of ACCase subunit alpha (AccA) and ACCase subunit beta (AccD).

The protein resides in the cytoplasm. The enzyme catalyses N(6)-carboxybiotinyl-L-lysyl-[protein] + acetyl-CoA = N(6)-biotinyl-L-lysyl-[protein] + malonyl-CoA. The protein operates within lipid metabolism; malonyl-CoA biosynthesis; malonyl-CoA from acetyl-CoA: step 1/1. In terms of biological role, component of the acetyl coenzyme A carboxylase (ACC) complex. First, biotin carboxylase catalyzes the carboxylation of biotin on its carrier protein (BCCP) and then the CO(2) group is transferred by the carboxyltransferase to acetyl-CoA to form malonyl-CoA. The protein is Acetyl-coenzyme A carboxylase carboxyl transferase subunit alpha of Bacillus cereus (strain Q1).